Reading from the N-terminus, the 447-residue chain is Ribulose bisphosphate carboxylase large chain (447 aa).

Residues N89 and T139 each coordinate substrate. The Proton acceptor role is filled by K141. Position 143 (K143) interacts with substrate. Mg(2+) contacts are provided by K167, D169, and E170. K167 carries the N6-carboxylysine modification. The Proton acceptor role is filled by H260. Substrate contacts are provided by R261, H293, and S345.

It belongs to the RuBisCO large chain family. Type I subfamily. As to quaternary structure, heterohexadecamer of 8 large chains and 8 small chains; disulfide-linked. The disulfide link is formed within the large subunit homodimers. Mg(2+) serves as cofactor. The disulfide bond which can form in the large chain dimeric partners within the hexadecamer appears to be associated with oxidative stress and protein turnover.

It localises to the plastid. The protein resides in the chloroplast. The catalysed reaction is 2 (2R)-3-phosphoglycerate + 2 H(+) = D-ribulose 1,5-bisphosphate + CO2 + H2O. The enzyme catalyses D-ribulose 1,5-bisphosphate + O2 = 2-phosphoglycolate + (2R)-3-phosphoglycerate + 2 H(+). RuBisCO catalyzes two reactions: the carboxylation of D-ribulose 1,5-bisphosphate, the primary event in carbon dioxide fixation, as well as the oxidative fragmentation of the pentose substrate in the photorespiration process. Both reactions occur simultaneously and in competition at the same active site. In Ligustrum vulgare (Common privet), this protein is Ribulose bisphosphate carboxylase large chain.